The chain runs to 165 residues: Cyclic pyranopterin monophosphate synthase (165 aa).

Residues 75–77 (MCH) and 115–116 (ME) each bind substrate. Asp130 is a catalytic residue.

It belongs to the MoaC family. In terms of assembly, homohexamer; trimer of dimers.

It catalyses the reaction (8S)-3',8-cyclo-7,8-dihydroguanosine 5'-triphosphate = cyclic pyranopterin phosphate + diphosphate. The protein operates within cofactor biosynthesis; molybdopterin biosynthesis. Functionally, catalyzes the conversion of (8S)-3',8-cyclo-7,8-dihydroguanosine 5'-triphosphate to cyclic pyranopterin monophosphate (cPMP). The polypeptide is Cyclic pyranopterin monophosphate synthase (Halalkalibacterium halodurans (strain ATCC BAA-125 / DSM 18197 / FERM 7344 / JCM 9153 / C-125) (Bacillus halodurans)).